The primary structure comprises 260 residues: LOB domain-containing protein 6 (260 aa).

The LOB domain occupies 32-133 (SPCAACKFLR…QDLARAKYEL (102 aa)).

The protein belongs to the LOB domain-containing protein family. Interacts with RS2. As to expression, expressed in leaves, leaf primordia, immature ears, immature tassels, whole ovules, silk and husk leaves. Found on the adaxial side of organs.

It localises to the nucleus. In terms of biological role, promotes the switch from proliferation to differentiation in the embryo sac. Negative regulator of cell proliferation in the adaxial side of leaves. Regulates the formation of a symmetric lamina and the establishment of venation. Interacts directly with RS2 (rough sheath 2) to repress some knox homeobox genes. This Zea mays (Maize) protein is LOB domain-containing protein 6 (LBD6).